A 512-amino-acid polypeptide reads, in one-letter code: Sucrose transport protein SUC5 (512 aa).

A disordered region spans residues 1 to 27; sequence MGALEAERAANNATALETQSSPEDLGQ. Residues 1 to 33 are Cytoplasmic-facing; sequence MGALEAERAANNATALETQSSPEDLGQPSPLRK. Over residues 11–22 the composition is skewed to polar residues; it reads NNATALETQSSP. The residue at position 20 (Ser-20) is a Phosphoserine. The helical transmembrane segment at 34–54 threads the bilayer; that stretch reads IISVASIAAGVQFGWALQLSL. The Extracellular portion of the chain corresponds to 55–67; the sequence is LTPYIQLLGIPHK. A helical transmembrane segment spans residues 68–88; that stretch reads WSSYMWLCGPISGMIVQPIVG. Over 89-102 the chain is Cytoplasmic; the sequence is YHSDRCESRFGRRR. A helical membrane pass occupies residues 103–123; the sequence is PFIAAGVALVAVSVFLIGFAA. The Extracellular segment spans residues 124 to 140; that stretch reads DMGHSFGDKLENKVRTR. The chain crosses the membrane as a helical span at residues 141–161; sequence AIIIFLTGFWFLDVANNTLQG. Residues 162–179 lie on the Cytoplasmic side of the membrane; sequence PCRAFLADLAAGDAKKTR. Residues 180–200 form a helical membrane-spanning segment; it reads VANACFSFFMAVGNVLGYAAG. Topologically, residues 201 to 225 are extracellular; the sequence is SYTNLHKMFPFTMTKACDIYCANLK. Residues 226–246 form a helical membrane-spanning segment; that stretch reads TCFFLSITLLLIVTFSSLWYV. Residues 247 to 281 are Cytoplasmic-facing; that stretch reads KDKQWSPPQGDKEEKTSSLFFFGEIFGAVRHMKRP. A helical membrane pass occupies residues 282–302; that stretch reads MVMLLIVTVINWIAWFPFILY. Residues 303 to 333 lie on the Extracellular side of the membrane; sequence DTDWMGREVYGGNSDGDERSKKLYDQGVQAG. A helical transmembrane segment spans residues 334–354; that stretch reads ALGLMFNSILLGFVSLGVESI. The Cytoplasmic portion of the chain corresponds to 355 to 363; it reads GRKMGGAKR. A helical membrane pass occupies residues 364–384; it reads LWGCVNFILAIGLAMTVLVTK. Over 385 to 406 the chain is Extracellular; it reads SAEHHREIAGPLAGPSSGIKAG. The chain crosses the membrane as a helical span at residues 407–427; it reads VFSLFTVLGIPLAITYSIPFA. At 428 to 440 the chain is on the cytoplasmic side; that stretch reads LASIFSTNSGAGQ. Residues 441–461 traverse the membrane as a helical segment; the sequence is GLSLGVLNIAICIPQMIVSFS. Residues 462–473 lie on the Extracellular side of the membrane; the sequence is SGPLDAQFGGGN. Residues 474–494 form a helical membrane-spanning segment; sequence LPSFVVGAIAAAVSGVLALTV. Residues 495–512 are Cytoplasmic-facing; it reads LPSPPPDAPAMSGAMGFH.

This sequence belongs to the glycoside-pentoside-hexuronide (GPH) cation symporter transporter (TC 2.A.2.4) family. In terms of tissue distribution, widely expressed. Expressed in the endosperm and on the epidermis of the outer surface of the cotyledons of torpedo-stage or older embryos.

It is found in the cell membrane. The enzyme catalyses sucrose(out) + H(+)(out) = sucrose(in) + H(+)(in). It functions in the pathway glycan biosynthesis; sucrose metabolism. Inhibited by protonophores (e.g. carbonyl cyanide m-chlorophenyl-hydrazone (CCCP)) and SH group inhibitors (e.g. p-chloromercuribenzene sulphonic acid (PCMBS)). In terms of biological role, responsible in a heterologous system for the transport of sucrose into the cell, with the concomitant uptake of protons (symport system). Can also transport biotin, and probably maltose at a lesser rate. In planta, the role of SUC5 for the transport of sucrose seems to be negligible. Plays a role in the nutrition of the filial tissues during early seed development and is probably involved in the import of biotin into the endosperm and the embryo epidermis. The polypeptide is Sucrose transport protein SUC5 (Arabidopsis thaliana (Mouse-ear cress)).